The primary structure comprises 480 residues: Cobyric acid synthase (480 aa).

Residues Lys249–Ala436 enclose the GATase cobBQ-type domain. Cys330 (nucleophile) is an active-site residue. The active site involves His428.

Belongs to the CobB/CobQ family. CobQ subfamily.

Its pathway is cofactor biosynthesis; adenosylcobalamin biosynthesis. Its function is as follows. Catalyzes amidations at positions B, D, E, and G on adenosylcobyrinic A,C-diamide. NH(2) groups are provided by glutamine, and one molecule of ATP is hydrogenolyzed for each amidation. The chain is Cobyric acid synthase from Vibrio vulnificus (strain YJ016).